The following is a 1605-amino-acid chain: Sister chromatid cohesion protein PDS5 homolog A (1605 aa).

14 HEAT repeats span residues 50 to 89 (KSIQPFLDAVIKPEILNHQDKDVKLLVASCVSEITRITAP), 96 to 136 (NIMK…YRSC), 146 to 183 (DLVKEVFTTFLDVARDDHPEIVFSSMQNIMIVLLEESE), 184 to 221 (DVQEHLLLILLSKLGRNRSDVRDAARRLAMKVIEHCAP), 261 to 298 (QALSGVAPYLTGELLADKLETRLKVVGLVGELFSLPGR), 302 to 339 (EEFDSIFLEFLKRLTDRVVEVRMAILDHIKDCLLSDPL), 341 to 378 (AEASQIISALCDRLLDYDENIRKQVVAVICDVSVSALT), 380 to 416 (IPVDTMKLVAERLRDKAILVKTYTMERLTELFRVYCL), 552 to 591 (ANIWKILTNLLDPNTSITQASRIRDDMLKILSEKHSLYDF), 644 to 681 (SLFDGAEEELISFLKDDDEMMKEGTLKILAKAGGTIRE), 723 to 758 (KSLSVLYKRLVDMLEDKRYQPAVLQCLGCIAQIAMP), 821 to 860 (AGVDDLLGILKNILSFGEVSEDLESSSVDKAHLRLAAAKA), 961 to 1000 (LYPHHILPYLVHALAHHSCPDVEKCKDVKEYEMIYRQLYL), and 1050 to 1088 (HAICELGLSIINHLTQKEPDLQGEITPVSLPPTLYKPSE). Disordered stretches follow at residues 1155-1182 (LRAQGTKTRKGKKNKSVPAEDENGKNDV) and 1203-1262 (ESSN…PKVQ). The segment covering 1211-1225 (SPSERAEICQRDQKG) has biased composition (basic and acidic residues). A Nuclear localization signal 1 motif is present at residues 1226–1233 (NKRNVGDA). Ser1274 carries the post-translational modification Phosphoserine. The segment covering 1279–1295 (NVSLDSHDENSDQEKML) has biased composition (basic and acidic residues). 3 disordered regions span residues 1279 to 1307 (NVSLDSHDENSDQEKMLESISPRKRKKSL), 1324 to 1353 (ERSRSAGGGDSKLKSASGSMKKRKNVSGLA), and 1423 to 1605 (GKTA…RTAI). Phosphoserine is present on Ser1299. Basic residues-rich tracts occupy residues 1425-1442 (TAKKSRTSKGNSKKKRSS) and 1464-1476 (KGKRTPKKNLKQL). Positions 1426 to 1433 (AKKSRTSK) match the Nuclear localization signal 2 motif. Composition is skewed to basic and acidic residues over residues 1477-1495 (HPKDTPKSLSLEHEKVESR), 1514-1527 (GEEKSESEGKSLKE), and 1534-1574 (VVNK…NEME). Phosphoserine occurs at positions 1524, 1562, and 1584. Residues 1575–1585 (REAEENAETSD) are compositionally biased toward acidic residues. Thr1588 carries the phosphothreonine modification.

It belongs to the PDS5 family. As to quaternary structure, interacts with the cohesin complex. Interacts with DEK3.

The protein localises to the nucleus. Cohesin cofactor dispensable during the meiotic division but playing an important role in DNA repair by homologous recombination (HR) probably by helping SMC5/SMC6 complex. Regulator of sister chromatid cohesion in mitosis which may stabilize cohesin complex association with chromatin. May couple sister chromatid cohesion during mitosis to DNA replication. Cohesion ensures that chromosome partitioning is accurate in both meiotic and mitotic cells and plays an important role in DNA repair. The chain is Sister chromatid cohesion protein PDS5 homolog A from Arabidopsis thaliana (Mouse-ear cress).